Consider the following 774-residue polypeptide: Penicillin acylase 2 proenzyme (774 aa).

Serine 240 serves as the catalytic Nucleophile.

The protein belongs to the peptidase S45 family. Heterodimer of a small subunit and a large subunit processed from the same precursor.

The enzyme catalyses a penicillin + H2O = 6-aminopenicillanate + a carboxylate. This Pseudomonas sp. (strain SE83) protein is Penicillin acylase 2 proenzyme (acyII).